A 335-amino-acid polypeptide reads, in one-letter code: Serine protease 42 (335 aa).

Positions 1–24 are cleaved as a signal peptide; it reads MASGGGSLGLIVFLLLLQPKPCEA. An N-linked (GlcNAc...) asparagine glycan is attached at Asn67. The Peptidase S1 domain maps to 79–315; the sequence is IMGGVDAEEG…YSKWLIAVVN (237 aa). Cys104 and Cys120 are disulfide-bonded. Catalysis depends on His119, which acts as the Charge relay system. Residue Asn140 is glycosylated (N-linked (GlcNAc...) asparagine). Asp165 functions as the Charge relay system in the catalytic mechanism. Asn176 is a glycosylation site (N-linked (GlcNAc...) asparagine). 3 cysteine pairs are disulfide-bonded: Cys199–Cys273, Cys232–Cys253, and Cys263–Cys291. The Charge relay system role is filled by Ser267.

Belongs to the peptidase S1 family. In terms of tissue distribution, testis-specific. Mainly detected in round spermatids at all the eminiferous epithelial stages (at protein level).

The protein localises to the cytoplasm. It localises to the cell membrane. Its function is as follows. Plays a role in spermatogenesis. Involved in germ cell survival during meiosis. Lacks protease activity in vitro. This is Serine protease 42 from Mus musculus (Mouse).